Consider the following 128-residue polypeptide: Probable 4-amino-4-deoxy-L-arabinose-phosphoundecaprenol flippase subunit ArnF (128 aa).

The Cytoplasmic segment spans residues 1–2; it reads MG. Residues 3 to 23 form a helical membrane-spanning segment; sequence LIWGLFSVIIASVAQLSLGFA. The Periplasmic portion of the chain corresponds to 24 to 35; it reads ASHLPPMTHLWD. Residues 36–56 traverse the membrane as a helical segment; that stretch reads FIAALLAFGLDARILLLGLLG. At 57 to 76 the chain is on the cytoplasmic side; sequence YLLSVFCWYKTLHKLALSKA. The chain crosses the membrane as a helical span at residues 77–97; sequence YALLSMSYVLVWIASMVLPGW. The Periplasmic portion of the chain corresponds to 98 to 100; sequence EGT. A helical membrane pass occupies residues 101 to 121; the sequence is FSLKALLGVACIMSGLMLIFL. Over 122–128 the chain is Cytoplasmic; the sequence is PTTKQRY.

Belongs to the ArnF family. As to quaternary structure, heterodimer of ArnE and ArnF.

Its subcellular location is the cell inner membrane. Its pathway is bacterial outer membrane biogenesis; lipopolysaccharide biosynthesis. Functionally, translocates 4-amino-4-deoxy-L-arabinose-phosphoundecaprenol (alpha-L-Ara4N-phosphoundecaprenol) from the cytoplasmic to the periplasmic side of the inner membrane. The sequence is that of Probable 4-amino-4-deoxy-L-arabinose-phosphoundecaprenol flippase subunit ArnF from Shigella boydii serotype 4 (strain Sb227).